Here is a 196-residue protein sequence, read N- to C-terminus: NADPH:quinone oxidoreductase (196 aa).

The protein belongs to the SsuE family. In terms of assembly, homotetramer. The cofactor is FMN.

It localises to the cell membrane. It carries out the reaction a quinone + NADH + H(+) = a quinol + NAD(+). The catalysed reaction is a quinone + NADPH + H(+) = a quinol + NADP(+). The enzyme apparently serves as a quinone reductase in connection with conjugation reactions of hydroquinones involved in detoxification pathways. This is NADPH:quinone oxidoreductase (NQR) from Arabidopsis thaliana (Mouse-ear cress).